Here is a 1318-residue protein sequence, read N- to C-terminus: MSQKTNENVERYTQFLQKPQKPIQPYICSTLNDFQEERDFLANNIFPQLNELCNSWGTYFKAVDLSWSALKAPKSLPTHLFRQYSCLRSQRLKLCLDYVNSCFPFFICMLGQTYGDFLPDYSHFMTSKVTRLSSLSKVENLYVAAKNGYPWVLENPSCSLTEFEIIQAAFLNESQFQYFYFRTGTTLLKALDDEKKGERLPSSSSTNEEETLRIGKLKAKIISKGLPVRFYSDLHELGELVFKDWSVVIEKLHPATLMIENIDYKHSFERFYHEEFTEKCKQMCVISKESDRTFEILEKFALKDVELDFNNVAADSSLDSVPRFFRINPTPTYKSILLLSREHGCGKSTLIANWVNYFKKKHPSMLLIPHFVGSTCESSYIMSVIHYFITELQYRNYGTQLETDILNEDSDGLVFSFLVEVFIASISLKPCILVLDGIEELIGIYGISGQKVKDFSWLPHSLSPHCKFIMSTVSSSLSYKSLCARPDVRTVELISTGDEETKLNIFRKHLSIPMMDPFEQSTQALRKKPDLSPLKLTILANELKEYRINHNEFQCMKEYLEAVSVQELWELVLKRWIEDYSWTFQPKRANSDTVASGEGLDSWVADALCLLCLSHGGLAEDELLQLLDMLGYRNHYKVTALHWAAFRNATKQWVQEKPNGLLYFWHQSLSAVEHKLLGVITPVESSPCSFQTPMNHKKTHFHQVLIRYFQRQTSFWRVYQELPWHMKMSGCLRGLCGFLSSPTITDFISKIQSLGFWTRLHLIHFWNVLLEAGYDVSEAYLLSVAKIKADQCHTMRKSGTLSVLQCRLIELTVLDKCRLMFFIGSFLKFMGKTNEAEELFLSVEDMLVQSQSMTDMLLKVQNAIGELYLETGMTQEGFQYFQKAWSSMLRLSLSDLEDSRDLVKQKVRVLDNLAKSASEEYLKENHILEYATEISNLLDNNPRDQATMKYIEGVLMFVAGNTSLAKMKLRECLNIRKSLFGKKNMLVGEVMEFLADLLFFPQRDSKKSQRKQVLKYYKQVIKIKENAETLAKSSLLRKQLSISLSDTLCKLAGHLLASDSCHHVMIEAVGYLYRSVDLRVIHLGSSHSSIHGIHGILHLLREIEWIRSRRYWPQGMSQQHSEGSRNGFSLWEHLVKLNYHSAQSSNTVSSAMCMNADKLHRARRMDLAPQTISDKSKCAPGKGKKKPIICISAEEKIQRKTQNNAEIWNGSGKEASKKKTDYSSNILSLGKMNGLIKLSRQRILLAKSESGEGEITTIYHHPLPWPVSTKNPGESEFISEKWLFHSPDYISISQKSFLQRRLHIETKLLKTSNDINKE.

6 TPR repeats span residues 399-432 (TQLE…KPCI), 653-684 (WVQE…TPVE), 817-850 (CRLM…LVQS), 858-891 (LKVQ…MLRL), 991-1027 (MEFL…KENA), and 1045-1082 (SDTL…RVIH).

The protein localises to the cytoplasm. The sequence is that of Putative tetratricopeptide repeat protein 41 from Homo sapiens (Human).